The following is a 310-amino-acid chain: Phosphoribosylaminoimidazole-succinocarboxamide synthase (310 aa).

This sequence belongs to the SAICAR synthetase family.

It catalyses the reaction 5-amino-1-(5-phospho-D-ribosyl)imidazole-4-carboxylate + L-aspartate + ATP = (2S)-2-[5-amino-1-(5-phospho-beta-D-ribosyl)imidazole-4-carboxamido]succinate + ADP + phosphate + 2 H(+). It functions in the pathway purine metabolism; IMP biosynthesis via de novo pathway; 5-amino-1-(5-phospho-D-ribosyl)imidazole-4-carboxamide from 5-amino-1-(5-phospho-D-ribosyl)imidazole-4-carboxylate: step 1/2. The chain is Phosphoribosylaminoimidazole-succinocarboxamide synthase from Stenotrophomonas maltophilia (strain K279a).